The chain runs to 756 residues: 5-methyltetrahydropteroyltriglutamate--homocysteine methyltransferase (756 aa).

Residues 16–19 and K112 contribute to the 5-methyltetrahydropteroyltri-L-glutamate site; that span reads RELK. L-homocysteine is bound by residues 432–434 and E485; that span reads IGS. Residues 432–434 and E485 each bind L-methionine; that span reads IGS. Residues 516-517 and W562 each bind 5-methyltetrahydropteroyltri-L-glutamate; that span reads RC. D600 serves as a coordination point for L-homocysteine. Residue D600 coordinates L-methionine. A 5-methyltetrahydropteroyltri-L-glutamate-binding site is contributed by E606. Residues H642, C644, and E666 each contribute to the Zn(2+) site. Residue H695 is the Proton donor of the active site. C727 is a binding site for Zn(2+).

Belongs to the vitamin-B12 independent methionine synthase family. It depends on Zn(2+) as a cofactor.

It carries out the reaction 5-methyltetrahydropteroyltri-L-glutamate + L-homocysteine = tetrahydropteroyltri-L-glutamate + L-methionine. Its pathway is amino-acid biosynthesis; L-methionine biosynthesis via de novo pathway; L-methionine from L-homocysteine (MetE route): step 1/1. Catalyzes the transfer of a methyl group from 5-methyltetrahydrofolate to homocysteine resulting in methionine formation. This is 5-methyltetrahydropteroyltriglutamate--homocysteine methyltransferase from Haemophilus influenzae (strain PittEE).